The sequence spans 671 residues: NADPH--cytochrome P450 reductase (671 aa).

Over 1-14 (MSAEHVEEVVSEEP) the chain is Lumenal. The helical transmembrane segment at 15 to 35 (FLGTLDIALLVVLLVGATWYF) threads the bilayer. At 36–671 (MRSRKKEEAP…QKRYSADVWS (636 aa)) the chain is on the cytoplasmic side. Positions 77–221 (LVVFYGSQTG…DFITWKDRFW (145 aa)) constitute a Flavodoxin-like domain. FMN contacts are provided by residues 83 to 88 (SQTGTA), 135 to 138 (ATYG), 170 to 179 (LGNKTYEHYN), and Asp205. An FAD-binding FR-type domain is found at 276-515 (KNPFLASVIV…FIRKSQFRLP (240 aa)). Position 295 (Arg295) interacts with NADP(+). FAD contacts are provided by residues 451-454 (RYYS), 469-471 (TAV), Tyr475, and 485-488 (GVAT). NADP(+) contacts are provided by residues Thr529, 589–590 (SR), 595–599 (KIYVT), and Asp632. Trp670 is a binding site for FAD.

It belongs to the NADPH--cytochrome P450 reductase family. In the N-terminal section; belongs to the flavodoxin family. This sequence in the C-terminal section; belongs to the flavoprotein pyridine nucleotide cytochrome reductase family. FAD is required as a cofactor. Requires FMN as cofactor.

The protein localises to the endoplasmic reticulum membrane. The catalysed reaction is 2 oxidized [cytochrome P450] + NADPH = 2 reduced [cytochrome P450] + NADP(+) + H(+). In terms of biological role, this enzyme is required for electron transfer from NADP to cytochrome P450 in microsomes. It can also provide electron transfer to heme oxygenase and cytochrome B5. The protein is NADPH--cytochrome P450 reductase of Musca domestica (House fly).